Here is a 182-residue protein sequence, read N- to C-terminus: Small ribosomal subunit protein uS4 (182 aa).

Disordered regions lie at residues 1-23 (MGHP…ADRI) and 158-182 (SSVA…KDEE). Residues 103-170 (RRLQSLVFKR…AKQFETQETE (68 aa)) enclose the S4 RNA-binding domain. Residues 167-182 (QETEEVAAEEEPKDEE) are compositionally biased toward acidic residues.

The protein belongs to the universal ribosomal protein uS4 family. Part of the 30S ribosomal subunit. Contacts protein S5. The interaction surface between S4 and S5 is involved in control of translational fidelity.

Functionally, one of the primary rRNA binding proteins, it binds directly to 16S rRNA where it nucleates assembly of the body of the 30S subunit. Its function is as follows. With S5 and S12 plays an important role in translational accuracy. The sequence is that of Small ribosomal subunit protein uS4 from Methanosphaera stadtmanae (strain ATCC 43021 / DSM 3091 / JCM 11832 / MCB-3).